The primary structure comprises 173 residues: Putative phosphoesterase GTNG_0743 (173 aa).

His34 acts as the Proton donor in catalysis. 2 consecutive short sequence motifs (HXTX) follow at residues His34–Leu37 and His115–Ile118. His115 (proton acceptor) is an active-site residue.

The protein belongs to the 2H phosphoesterase superfamily. YjcG family.

The sequence is that of Putative phosphoesterase GTNG_0743 from Geobacillus thermodenitrificans (strain NG80-2).